The following is a 99-amino-acid chain: Small integral membrane protein 14 (99 aa).

Residues 1–49 (MAEGGFDPCECVCSHEHAMRRLINLLRQSQSYCTDTECLQELPGPSGDN) lie on the Lumenal side of the membrane. Residues 50-70 (GISVTMILVAWMVIALILFLL) form a helical membrane-spanning segment. Over 71–99 (RPPNLRGSNLPGKPTSPHNGQDPPAPPVD) the chain is Cytoplasmic. A disordered region spans residues 77–99 (GSNLPGKPTSPHNGQDPPAPPVD).

The protein resides in the endoplasmic reticulum membrane. The polypeptide is Small integral membrane protein 14 (SMIM14) (Pongo abelii (Sumatran orangutan)).